Reading from the N-terminus, the 278-residue chain is Acyl-[acyl-carrier-protein]--UDP-N-acetylglucosamine O-acyltransferase (278 aa).

Belongs to the transferase hexapeptide repeat family. LpxA subfamily. In terms of assembly, homotrimer.

Its subcellular location is the cytoplasm. It catalyses the reaction a (3R)-hydroxyacyl-[ACP] + UDP-N-acetyl-alpha-D-glucosamine = a UDP-3-O-[(3R)-3-hydroxyacyl]-N-acetyl-alpha-D-glucosamine + holo-[ACP]. The protein operates within glycolipid biosynthesis; lipid IV(A) biosynthesis; lipid IV(A) from (3R)-3-hydroxytetradecanoyl-[acyl-carrier-protein] and UDP-N-acetyl-alpha-D-glucosamine: step 1/6. Functionally, involved in the biosynthesis of lipid A, a phosphorylated glycolipid that anchors the lipopolysaccharide to the outer membrane of the cell. In Brucella anthropi (strain ATCC 49188 / DSM 6882 / CCUG 24695 / JCM 21032 / LMG 3331 / NBRC 15819 / NCTC 12168 / Alc 37) (Ochrobactrum anthropi), this protein is Acyl-[acyl-carrier-protein]--UDP-N-acetylglucosamine O-acyltransferase.